A 103-amino-acid chain; its full sequence is Truncated secreted TNF-receptor-like protein A53 (103 aa).

A TNFR-Cys 1 repeat occupies 36 to 73 (SCDKGEYLDKRHNQCCNRCPPGEFAKVRCNGNDNTKCE). Cystine bridges form between cysteine 37-cysteine 50, cysteine 51-cysteine 64, and cysteine 54-cysteine 72. The TNFR-Cys 2; truncated repeat unit spans residues 74-103 (RCPPHTYTTIPIILMDVINVENAQQDHLIR).

Belongs to the poxviridae A53R protein family.

The chain is Truncated secreted TNF-receptor-like protein A53 from Vaccinia virus (strain Copenhagen) (VACV).